A 1375-amino-acid chain; its full sequence is DNA-directed RNA polymerase subunit beta' (1375 aa).

Residues Cys-70, Cys-72, Cys-85, and Cys-88 each coordinate Zn(2+). Residues Asp-460, Asp-462, and Asp-464 each coordinate Mg(2+). Residues Cys-800, Cys-874, Cys-881, and Cys-884 each coordinate Zn(2+).

It belongs to the RNA polymerase beta' chain family. In terms of assembly, the RNAP catalytic core consists of 2 alpha, 1 beta, 1 beta' and 1 omega subunit. When a sigma factor is associated with the core the holoenzyme is formed, which can initiate transcription. It depends on Mg(2+) as a cofactor. Zn(2+) is required as a cofactor.

It catalyses the reaction RNA(n) + a ribonucleoside 5'-triphosphate = RNA(n+1) + diphosphate. Functionally, DNA-dependent RNA polymerase catalyzes the transcription of DNA into RNA using the four ribonucleoside triphosphates as substrates. The polypeptide is DNA-directed RNA polymerase subunit beta' (Bdellovibrio bacteriovorus (strain ATCC 15356 / DSM 50701 / NCIMB 9529 / HD100)).